Consider the following 349-residue polypeptide: N-formyl peptide receptor 3 (349 aa).

Residues 1-27 (METNFSIPLNETEEVLPEPAGHTVLWI) lie on the Extracellular side of the membrane. N-linked (GlcNAc...) asparagine glycans are attached at residues Asn4 and Asn10. A helical transmembrane segment spans residues 28 to 50 (FSLLVHGVTFIFGVLGNGLVIWV). Over 51 to 61 (AGFLMTRTVNT) the chain is Cytoplasmic. Residues 62 to 83 (ICYLNLALADFSFSAILPFHMV) traverse the membrane as a helical segment. Over 84–100 (SVAMREKWPFGSFLCKL) the chain is Extracellular. Cysteines 98 and 176 form a disulfide. A helical membrane pass occupies residues 101–121 (VHVMIDINLFVSVYLITIIAL). Topologically, residues 122-140 (DRCICVLHPAWAQNHRTMS) are cytoplasmic. A helical transmembrane segment spans residues 141 to 162 (LAKRVMTGLWILTIVLTLPNFI). Residues 163-205 (FWTTISTTNGDTYCIFNFPFWGDTAVERLNVFITMAKVFLILH) lie on the Extracellular side of the membrane. The chain crosses the membrane as a helical span at residues 206-226 (FIIGFSMPMSIITVCYGIIAA). Topologically, residues 227 to 242 (KIHRNHMIKSSRPLRV) are cytoplasmic. A helical membrane pass occupies residues 243-266 (FAAVVASFFICWFPYELIGILMAV). Residues 267–286 (WLKEMLLNGKYKIILVLINP) lie on the Extracellular side of the membrane. Residues 287-306 (TSSLAFFNSCLNPILYVFLG) form a helical membrane-spanning segment. The Cytoplasmic segment spans residues 307–349 (SNFQERLIRSLPTSLERALTEVPDSAQTSNTHTTSASPPEETE). Residues 327 to 349 (EVPDSAQTSNTHTTSASPPEETE) form a disordered region. Over residues 331–343 (SAQTSNTHTTSAS) the composition is skewed to polar residues.

Belongs to the G-protein coupled receptor 1 family.

Its subcellular location is the cell membrane. Functionally, low affinity receptor for N-formyl-methionyl peptides, which are powerful neutrophils chemotactic factors. Binding of FMLP to the receptor causes activation of neutrophils. This response is mediated via a G-protein that activates a phosphatidylinositol-calcium second messenger system. The polypeptide is N-formyl peptide receptor 3 (FPR3) (Gorilla gorilla gorilla (Western lowland gorilla)).